Reading from the N-terminus, the 151-residue chain is 3-hydroxyacyl-[acyl-carrier-protein] dehydratase FabZ (151 aa).

The active site involves His54.

This sequence belongs to the thioester dehydratase family. FabZ subfamily.

Its subcellular location is the cytoplasm. It carries out the reaction a (3R)-hydroxyacyl-[ACP] = a (2E)-enoyl-[ACP] + H2O. Functionally, involved in unsaturated fatty acids biosynthesis. Catalyzes the dehydration of short chain beta-hydroxyacyl-ACPs and long chain saturated and unsaturated beta-hydroxyacyl-ACPs. The sequence is that of 3-hydroxyacyl-[acyl-carrier-protein] dehydratase FabZ from Blochmanniella floridana.